We begin with the raw amino-acid sequence, 197 residues long: Probable GTP-binding protein EngB (197 aa).

The region spanning 22–197 is the EngB-type G domain; sequence TGVEVAFAGR…FKEKLDTWYQ (176 aa). GTP contacts are provided by residues 30–37, 57–61, 75–78, 142–145, and 177–179; these read GRSNAGKS, GRTQL, DLPG, TKAD, and FSS. Residues Ser37 and Thr59 each coordinate Mg(2+).

Belongs to the TRAFAC class TrmE-Era-EngA-EngB-Septin-like GTPase superfamily. EngB GTPase family. It depends on Mg(2+) as a cofactor.

Necessary for normal cell division and for the maintenance of normal septation. The polypeptide is Probable GTP-binding protein EngB (Francisella tularensis subsp. tularensis (strain FSC 198)).